Consider the following 276-residue polypeptide: Ribosomal RNA small subunit methyltransferase A (276 aa).

S-adenosyl-L-methionine contacts are provided by Asn-27, Leu-29, Gly-54, Glu-75, Asp-101, and Asn-123.

The protein belongs to the class I-like SAM-binding methyltransferase superfamily. rRNA adenine N(6)-methyltransferase family. RsmA subfamily.

Its subcellular location is the cytoplasm. The enzyme catalyses adenosine(1518)/adenosine(1519) in 16S rRNA + 4 S-adenosyl-L-methionine = N(6)-dimethyladenosine(1518)/N(6)-dimethyladenosine(1519) in 16S rRNA + 4 S-adenosyl-L-homocysteine + 4 H(+). In terms of biological role, specifically dimethylates two adjacent adenosines (A1518 and A1519) in the loop of a conserved hairpin near the 3'-end of 16S rRNA in the 30S particle. May play a critical role in biogenesis of 30S subunits. The sequence is that of Ribosomal RNA small subunit methyltransferase A from Bartonella quintana (strain Toulouse) (Rochalimaea quintana).